A 590-amino-acid polypeptide reads, in one-letter code: Putative histone-lysine N-methyltransferase PRDM6 (590 aa).

Positions 25-87 (QLFPHGGGGP…STPASSSTSA (63 aa)) are disordered. Positions 29–42 (HGGGGPLKGGGAAG) are enriched in gly residues. Residues 71 to 87 (ASLSSASSTPASSSTSA) show a composition bias toward low complexity. The region spanning 241–360 (REVCLCTSTV…RGTELLVWYN (120 aa)) is the SET domain. Residues 468–490 (WKCGQCFKTFTQRILLQMHVCTQ) form a C2H2-type 1; degenerate zinc finger. 2 consecutive C2H2-type zinc fingers follow at residues 496–518 (YQCG…VVTH) and 524–546 (FKCG…IRTH). A C2H2-type 4; degenerate zinc finger spans residues 552-574 (FKCERCERSFTQATQLSRHQRMP).

The protein belongs to the class V-like SAM-binding methyltransferase superfamily. Interacts with HDAC1, HDAC2, HDAC3, CBX1 and EP300.

Its subcellular location is the nucleus. The catalysed reaction is L-lysyl(20)-[histone H4] + S-adenosyl-L-methionine = N(6)-methyl-L-lysyl(20)-[histone H4] + S-adenosyl-L-homocysteine + H(+). In terms of biological role, putative histone methyltransferase that acts as a transcriptional repressor of smooth muscle gene expression. Promotes the transition from differentiated to proliferative smooth muscle by suppressing differentiation and maintaining the proliferative potential of vascular smooth muscle cells. Also plays a role in endothelial cells by inhibiting endothelial cell proliferation, survival and differentiation. It is unclear whether it has histone methyltransferase activity in vivo. According to some authors, it does not act as a histone methyltransferase by itself and represses transcription by recruiting EHMT2/G9a. According to others, it possesses histone methyltransferase activity when associated with other proteins and specifically methylates 'Lys-20' of histone H4 in vitro. 'Lys-20' methylation represents a specific tag for epigenetic transcriptional repression. This is Putative histone-lysine N-methyltransferase PRDM6 (PRDM6) from Bos taurus (Bovine).